The primary structure comprises 163 residues: Thiol peroxidase (163 aa).

The region spanning leucine 16–asparagine 162 is the Thioredoxin domain. The active-site Cysteine sulfenic acid (-SOH) intermediate is cysteine 58. A disulfide bridge links cysteine 58 with cysteine 92.

The protein belongs to the peroxiredoxin family. Tpx subfamily. In terms of assembly, homodimer.

It catalyses the reaction a hydroperoxide + [thioredoxin]-dithiol = an alcohol + [thioredoxin]-disulfide + H2O. Functionally, thiol-specific peroxidase that catalyzes the reduction of hydrogen peroxide and organic hydroperoxides to water and alcohols, respectively. Plays a role in cell protection against oxidative stress by detoxifying peroxides. The polypeptide is Thiol peroxidase (Streptococcus gordonii).